A 627-amino-acid polypeptide reads, in one-letter code: (+)-sabinene synthase, chloroplastic (627 aa).

The transit peptide at 1–46 directs the protein to the chloroplast; sequence MSVISIVPLASNSCLYKSLMSSTHELKALCRPIATLGMCRRGKSVM. Mg(2+) is bound by residues Asp-378, Asp-382, and Asp-530. The DDXXD motif motif lies at 378-382; it reads DDIYD.

Belongs to the terpene synthase family. Tpsd subfamily. Monomer. Mg(2+) is required as a cofactor.

It is found in the plastid. It localises to the chloroplast. The enzyme catalyses (2E)-geranyl diphosphate = (1R,5R)-sabinene + diphosphate. The protein operates within terpene metabolism; oleoresin biosynthesis. Its function is as follows. Terpene synthase (TPS) involved in defensive oleoresin formation in conifers in response to insect attack (e.g. white pine weevil P.strobi) or other injury. Produces (+)-sabinene from geranyl diphosphate, but has no activity with geranylgeranyl diphosphate or farnesyl diphosphate. The polypeptide is (+)-sabinene synthase, chloroplastic (TPS-sab) (Picea sitchensis (Sitka spruce)).